A 154-amino-acid chain; its full sequence is UPF0756 membrane protein RBAM_026200 (154 aa).

4 helical membrane passes run 14–34 (AIALVAKNQSLLFAVGFLIVI), 54–74 (WGVTVITIAVLVPIATGDIGF), 87–107 (WIALGAGIAVALIAKNGLTLL), and 117–137 (LVIGTILAVALFGGVAVGPLI).

It belongs to the UPF0756 family.

The protein localises to the cell membrane. The protein is UPF0756 membrane protein RBAM_026200 of Bacillus velezensis (strain DSM 23117 / BGSC 10A6 / LMG 26770 / FZB42) (Bacillus amyloliquefaciens subsp. plantarum).